The primary structure comprises 62 residues: Photosystem II reaction center protein Z (62 aa).

Transmembrane regions (helical) follow at residues 8–28 (LVSI…VILV) and 41–61 (YASA…NSFV).

The protein belongs to the PsbZ family. PSII is composed of 1 copy each of membrane proteins PsbA, PsbB, PsbC, PsbD, PsbE, PsbF, PsbH, PsbI, PsbJ, PsbK, PsbL, PsbM, PsbT, PsbX, PsbY, PsbZ, Psb30/Ycf12, at least 3 peripheral proteins of the oxygen-evolving complex and a large number of cofactors. It forms dimeric complexes.

The protein localises to the plastid. Its subcellular location is the chloroplast thylakoid membrane. May control the interaction of photosystem II (PSII) cores with the light-harvesting antenna, regulates electron flow through the 2 photosystem reaction centers. PSII is a light-driven water plastoquinone oxidoreductase, using light energy to abstract electrons from H(2)O, generating a proton gradient subsequently used for ATP formation. In Guillardia theta (Cryptophyte), this protein is Photosystem II reaction center protein Z.